A 490-amino-acid polypeptide reads, in one-letter code: V-type proton ATPase subunit B (490 aa).

Arg-380 contributes to the ATP binding site.

This sequence belongs to the ATPase alpha/beta chains family. V-ATPase is a heteromultimeric enzyme made up of two complexes: the ATP-hydrolytic V1 complex and the proton translocation V0 complex. The V1 complex consists of three catalytic AB heterodimers that form a heterohexamer, three peripheral stalks each consisting of EG heterodimers, one central rotor including subunits D and F, and the regulatory subunits C and H. The proton translocation complex V0 consists of the proton transport subunit a, a ring of proteolipid subunits c9c'', rotary subunit d, subunits e and f, and the accessory subunits VhaAC45 and ATP6AP2. As to expression, expressed in Malpighian tubules, rectum, antennal palps and oviduct.

In terms of biological role, non-catalytic subunit of the V1 complex of vacuolar(H+)-ATPase (V-ATPase), a multisubunit enzyme composed of a peripheral complex (V1) that hydrolyzes ATP and a membrane integral complex (V0) that translocates protons. V-ATPase is responsible for acidifying and maintaining the pH of intracellular compartments and in some cell types, is targeted to the plasma membrane, where it is responsible for acidifying the extracellular environment. Essential for the proper assembly and activity of V-ATPase. The chain is V-type proton ATPase subunit B (Vha55) from Drosophila melanogaster (Fruit fly).